Reading from the N-terminus, the 66-residue chain is Large ribosomal subunit protein bL35 (66 aa).

Basic residues predominate over residues 1 to 26; the sequence is MPKMKTHRGSAKRFKKTASGKLKRGH. Residues 1–29 form a disordered region; sequence MPKMKTHRGSAKRFKKTASGKLKRGHAYT.

Belongs to the bacterial ribosomal protein bL35 family.

The chain is Large ribosomal subunit protein bL35 from Geobacillus kaustophilus (strain HTA426).